The sequence spans 347 residues: NADH-ubiquinone oxidoreductase chain 2 (347 aa).

11 helical membrane-spanning segments follow: residues 1 to 21 (MNPL…LITA), 25 to 45 (HWFL…PVLT), 55 to 75 (AAIK…MAIL), 96 to 116 (TMML…FWVP), 123 to 143 (TLMS…SIMY), 145 to 165 (IFPV…IMVG), 178 to 198 (ILAY…PYNP), 200 to 220 (ITIF…LALN), 237 to 257 (LTWL…LPPL), 274 to 294 (GTLI…YFYM), and 324 to 344 (FLLP…PLTF).

The protein belongs to the complex I subunit 2 family. As to quaternary structure, core subunit of respiratory chain NADH dehydrogenase (Complex I) which is composed of 45 different subunits. Interacts with TMEM242.

The protein resides in the mitochondrion inner membrane. The enzyme catalyses a ubiquinone + NADH + 5 H(+)(in) = a ubiquinol + NAD(+) + 4 H(+)(out). Core subunit of the mitochondrial membrane respiratory chain NADH dehydrogenase (Complex I) which catalyzes electron transfer from NADH through the respiratory chain, using ubiquinone as an electron acceptor. Essential for the catalytic activity and assembly of complex I. This Hylobates lar (Lar gibbon) protein is NADH-ubiquinone oxidoreductase chain 2.